Here is a 255-residue protein sequence, read N- to C-terminus: DNA repair protein RecO (255 aa).

This sequence belongs to the RecO family.

In terms of biological role, involved in DNA repair and RecF pathway recombination. This chain is DNA repair protein RecO, found in Listeria monocytogenes serotype 4b (strain CLIP80459).